A 160-amino-acid chain; its full sequence is 6,7-dimethyl-8-ribityllumazine synthase (160 aa).

5-amino-6-(D-ribitylamino)uracil-binding positions include tryptophan 27, 59–61, and 81–83; these read AIE and VVI. 86–87 is a binding site for (2S)-2-hydroxy-3-oxobutyl phosphate; sequence DT. Histidine 89 (proton donor) is an active-site residue. Asparagine 114 provides a ligand contact to 5-amino-6-(D-ribitylamino)uracil. Arginine 128 contacts (2S)-2-hydroxy-3-oxobutyl phosphate.

The protein belongs to the DMRL synthase family. Homopentamer.

It catalyses the reaction (2S)-2-hydroxy-3-oxobutyl phosphate + 5-amino-6-(D-ribitylamino)uracil = 6,7-dimethyl-8-(1-D-ribityl)lumazine + phosphate + 2 H2O + H(+). Its pathway is cofactor biosynthesis; riboflavin biosynthesis; riboflavin from 2-hydroxy-3-oxobutyl phosphate and 5-amino-6-(D-ribitylamino)uracil: step 1/2. Catalyzes the formation of 6,7-dimethyl-8-ribityllumazine by condensation of 5-amino-6-(D-ribitylamino)uracil with 3,4-dihydroxy-2-butanone 4-phosphate. This is the penultimate step in the biosynthesis of riboflavin. In Mycobacterium leprae (strain Br4923), this protein is 6,7-dimethyl-8-ribityllumazine synthase.